A 388-amino-acid polypeptide reads, in one-letter code: GTPase Obg (388 aa).

An Obg domain is found at 1-159 (MKFVDEAVIR…RSLKLELLLL (159 aa)). Residues 160 to 333 (ADVGLLGMPN…LATKLLDFIQ (174 aa)) form the OBG-type G domain. GTP is bound by residues 166 to 173 (GMPNAGKS), 191 to 195 (FTTLV), 213 to 216 (DIPG), 283 to 286 (NKAD), and 314 to 316 (SAY). 2 residues coordinate Mg(2+): Ser-173 and Thr-193.

This sequence belongs to the TRAFAC class OBG-HflX-like GTPase superfamily. OBG GTPase family. As to quaternary structure, monomer. Mg(2+) is required as a cofactor.

The protein resides in the cytoplasm. In terms of biological role, an essential GTPase which binds GTP, GDP and possibly (p)ppGpp with moderate affinity, with high nucleotide exchange rates and a fairly low GTP hydrolysis rate. Plays a role in control of the cell cycle, stress response, ribosome biogenesis and in those bacteria that undergo differentiation, in morphogenesis control. The chain is GTPase Obg from Shewanella sp. (strain MR-4).